The chain runs to 526 residues: Probable di/tripeptide-binding protein 5 (526 aa).

The first 21 residues, 1–21, serve as a signal peptide directing secretion; that stretch reads MRLAAFSLFLAPLLLAQPAAA.

The protein belongs to the bacterial solute-binding protein 5 family. As to quaternary structure, the complex is composed of two ATP-binding proteins (DppD and DppF), two transmembrane proteins (DppB and DppC) and a solute-binding protein (DppA5). Five orthologous SBPs (DppA1-A5) are present in P.aeruginosa, which increases the substrate specificity of the DppBCDF transporter.

Functionally, part of the ABC transporter DppABCDF involved in the uptake of various di/tripeptides. The sequence is that of Probable di/tripeptide-binding protein 5 from Pseudomonas aeruginosa (strain UCBPP-PA14).